We begin with the raw amino-acid sequence, 3500 residues long: MSVFDRLAGFADSVTNAKQVDVSTATAQKKAEQGVTTPLVSPDAAYQMQAARTGNVGANAFEPGTVQSDFMNLTPMQIMNKYGVEQGLQLINARADAGNQVFNDSVTTRTPGEELGDIATGVGLGFVNTLGGIGALGAGLLNDDAGAVVAQQLSKFNDAVHATQSQALQDKRKLFAARNLMNEVESERQYQTDKKEGTNDIVASLSKFGRDFVGSIENAAQTDSIISDGLAEGVGSLLGAGPVLRGASLLGKAVVPANTLRSAALAGAIDAGTGTQSLARIASTVGRAAPGMVGVGAMEAGGAYQQTADEIMKMSLKDLEKSPVYQQHIKDGMSPEQARRQTASETGLTAAAIQLPIAAATGPLVSRFEMAPFRAGSLGAVGMNLARETVEEGVQGATGQLAQNIAQQQNIDKNQDLLKGVGTQAGLGALYGFGSAGVVQAPAGAARLAGAATAPVLRTTMAGVKAAGSVAGKVVSPIKNTLVARGERVMKQNEEASPVADDYVAQAAQEAMAQAPEAEVTIRDAVEATDATPEQKVAAHQYVSDLMNATRFNPENYQEAPEHIRNAVAGSTDQVQVIQKLADLVNTLDESNPQALMEAASYMYDAVSEFEQFINRDPAALDSIPKDSPAIELLNRYTNLTANIQNTPKVIGALNVINRMINESAQNGSLNVTEESSPQEMQNVALAAEVAPEKLNPESVNVVLKHAADGRIKLNNRQIAALQNAAAILKGAREYDAEAARLGLRPQDIVSKQIKTDESRTQEGQYSALQHANRIRSAYNSGNFELASAYLNDFMQFAQHMQNKVGALNEHLVTGNADKNKSVHYQALTADREWVRSRTGLGVNPYDTKSVKFAQQVALEAKTVADIANALASAYPELKVSHIKVTPLDSRLNAPAAEVVKAFRQGNRDVASSQPKADSVNQVKETPVTKQEPVTSTVQTKTPVSESVKTEPTTKESSPQAIKEPVNQSEKQDVNLTNEDNIKQPTESVKETETSTKESTVTEELKEGIDAVYPSLVGTADSKAEGIKNYFKLSFTLPEEQKSRTVGSEAPLKDVAQALSSRARYELFTEKETANPAFNGEVIKRYKELMEHGEGIADILRSRLAKFLNTKDVGKRFAQGTEANRWVGGKLLNIVEQDGDTFKYNEQLLQTAVLAGLQWRLTATSNTAIKDAKDVAAITGIDQALLPEGLVEQFDTGMTLTEAVSSLAQKIESYWGLSRNPNAPLGYTKGIPTAMAAEILAAFVESTDVVENIVDMSEIDPDNKKTIGLYTITELDSFDPINSFPTAIEEAVLVNPTEKMFFGDDIPPVANTQLRNPAVRNTPEQKAALKAEQATEFYVHTPMVQFYETLGKDRILELMGAGTLNKELLNDNHAKSLEGKNRSVEDSYNQLFSVIEQVRAQSEDISTVPIHYAYNMTRVGRMQMLGKYNPQSAKLVREAILPTKATLDLSNQNNEDFSAFQLGLAQALDIKVHTMTREVMSDELTKLLEGNLKPAIDMMVEFNTTGSLPENAVDVLNTALGDRKSFVALMALMEYSRYLVAEDKSAFVTPLYVEADGVTNGPINAMMLMTGGLFTPDWIRNIAKGGLFIGSPNKTMNEHRSTADNNDLYQASTNALMESLGKLRSNYASNMPIQSQIDSLLSLMDLFLPDINLGENGALELKRGIAKNPLTITIYGSGARGIAGKLVSSVTDAIYERMSDVLKARAKDPNISAAMAMFGKQAASEAHAEELLARFLKDMETLTSTVPVKRKGVLELQSTGTGAKGKINPKTYTIKGEQLKALQENMLHFFVEPLRNGITQTVGESLVYSTEQLQKATQIQSVVLEDMFKQRVQEKLAEKAKDPTWKKGDFLTQKELNDIQASLNNLAPMIETGSQTFYIAGSENAEVANQVLATNLDDRMRVPMSIYAPAQAGVAGIPFMTIGTGDGMMMQTLSTMKGAPKNTLKIFDGMNIGLNDITDASRKANEAVYTSWQGNPIKNVYESYAKFMKNVDFSKLSPEALEAIGKSALEYDQRENATVDDIANAASLIERNLRNIALGVDIRHKVLDKVNLSIDQMAAVGAPYQNNGKIDLSNMTPEQQADELNKLFREELEARKQKVAKARAEVKEETVSEKEPVNPDFGMVGREHKASGVRILSATAIRNLAKISNLPSTQAATLAEIQKSLAAKDYKIIYGTPTQVAEYARQKNVTELTSQEMEEAQAGNIYGWTNFDDKTIYLVSPSMETLIHELVHASTFEEVYSFYQGNEVSPTSKQAIENLEGLMEQFRSLDISKDSPEMREAYADAIATIEGHLSNGFVDPAISKAAALNEFMAWGLANRALAAKQKRTSSLVQMVKDVYQAIKKLIWGRKQAPALGEDMFSNLLFNSAILMRSQPTTQAVAKDGTLFHSKAYGNNERLSQLNQTFDKLVTDYLRTDPVTEVERRGNVANALMSATRLVRDVQSHGFNMTAQEQSVFQMVTAALATEAAIDPHAMARAQELYTHVMKHLTVEHFMADPDSTNPADRYYAQQKYDTISGANLVEVDAKGRTSLLPTFLGLAMVNEELRSIIKEMPVPKADKKLGNDIDTLLTNAGTQVMESLNRRMAGDQKATNVQDSIDALSETIMAAALKRESFYDAVATPTGNFIDRANQYVTDSIERLSETVIEKADKVIANPSNIAAKGVAHLAKLTAAIASEKQGEIVAQGVMTAMNQGKVWQPFHDLVNDIVGRTKTNANVYDLIKLVKSQISQDRQQFREHLPTVIAGKFSRKLTDTEWSAMHTGLGKTDLAVLRETMSMAEIRDLLSSSKKVKDEISTLEKEIQNQAGRNWNLVQKKSKQLAQYMIMGEVGNNLLRNAHAISRLLGERITNGPVADVAAIDKLITLYSLELMNKSDRDLLSELAQSEVEGMEFSIAYMVGQRTEEMRKAKGDNRTLLNHFKGYIPVENQQGVNLIIADDKEFAKLNSQSFTRIGTYQGSTGFRTGSKGYYFSPVAARAPYSQGILQNVRNTAGGVDIGTGFTLGTMVAGRITDKPTVERITKALAKGERGREPLMPIYNSKGQVVAYEQSVDPNMLKHLNQDNHFAKMVGVWRGRQVEEAKAQRFNDILIEQLHAMYEKDIKDSSANKSQYVNLLGKIDDPVLADAINLMNIETRHKAEELFGKDELWVRRDMLNDALGYRAASIGDVWTGNSRWSPSTLDTVKKMFLGAFGNKAYHVVMNAENTIQNLVKDAKTVIVVKSVVVPAVNFLANIYQMIGRGVPVKDIAVNIPRKTSEINQYIKSRLRQIDAEAELRAAEGNPNLVRKLKTEIQSITDSHRRMSIWPLIEAGEFSSIADAGISRDDLLVAEGKIHEYMEKLANKLPEKVRNAGRYALIAKDTALFQGIQKTVEYSDFIAKAIIYDDLVKRKKKSSSEALGQVTEEFINYDRLPGRFRGYMESMGLMWFYNFKIRSIKVAMSMIRNNPVHSLIATVVPAPTMFGNVGLPIQDNMLTMLAEGRLDYSLGFGQGLRAPTLNPWFNLTH.

A disordered region spans residues 907-1003; the sequence is NRDVASSQPK…TSTKESTVTE (97 aa). Polar residues-rich tracts occupy residues 910–947 and 955–985; these read VASS…VSES and KESS…IKQP. Residues 1434–1437, 1556–1561, and 1667–1668 each bind ATP; these read KLVR, DGVTNG, and KN. Position 1556 (D1556) interacts with Mg(2+). D1948 serves as a coordination point for Mg(2+). Coiled-coil stretches lie at residues 2078-2111 and 2777-2810; these read EQQA…EETV and AEIR…NWNL.

This sequence belongs to the phage and mitochondrial RNA polymerase family. The cofactor is Mg(2+).

Its subcellular location is the virion. The catalysed reaction is RNA(n) + a ribonucleoside 5'-triphosphate = RNA(n+1) + diphosphate. Its function is as follows. DNA-dependent RNA polymerase, which is injected into the host upon infection and transcribes the phage early genes from promoters that have a 5-bp stem-3 nt loop hairpin structure. The polypeptide is Virion DNA-directed RNA polymerase (50) (Escherichia coli (Bacteriophage N4)).